The chain runs to 174 residues: MSSAAADHWAWLLVLSFVFGCNVLRVLLPSFSSFMSRVLQKDAEQESQMRAEIQDMKQELSTVNMMDEFARYARLERKINKMTDKLKTHVKARTAQLAKIKWVISVAFYVLQAALMISLIWKYYSVPVAVVPSKWITPLDRLVAFPTRVAGGVGITCWILVCNKVVAIVLHPFS.

The Lumenal segment spans residues 1–8 (MSSAAADH). A helical membrane pass occupies residues 9-29 (WAWLLVLSFVFGCNVLRVLLP). The Cytoplasmic segment spans residues 30 to 99 (SFSSFMSRVL…VKARTAQLAK (70 aa)). Residues 39–94 (LQKDAEQESQMRAEIQDMKQELSTVNMMDEFARYARLERKINKMTDKLKTHVKART) are a coiled coil. The interval 39–97 (LQKDAEQESQMRAEIQDMKQELSTVNMMDEFARYARLERKINKMTDKLKTHVKARTAQL) is interaction with GET3/TRC40. Residues 100 to 120 (IKWVISVAFYVLQAALMISLI) traverse the membrane as a helical segment. Residues 121 to 148 (WKYYSVPVAVVPSKWITPLDRLVAFPTR) are Lumenal-facing. A helical transmembrane segment spans residues 149 to 169 (VAGGVGITCWILVCNKVVAIV). Over 170-174 (LHPFS) the chain is Cytoplasmic.

The protein belongs to the WRB/GET1 family. As to quaternary structure, component of the Golgi to ER traffic (GET) complex, which is composed of GET1/WRB, CAMLG/GET2 and GET3. Within the complex, GET1 and CAMLG form a heterotetramer which is stabilized by phosphatidylinositol binding and which binds to the GET3 homodimer. Interacts with CAMLG (via C-terminus). GET3 shows a higher affinity for CAMLG than for GET1.

It is found in the endoplasmic reticulum membrane. Its function is as follows. Required for the post-translational delivery of tail-anchored (TA) proteins to the endoplasmic reticulum. Together with CAMLG/GET2, acts as a membrane receptor for soluble GET3/TRC40, which recognizes and selectively binds the transmembrane domain of TA proteins in the cytosol. Required to ensure correct topology and ER insertion of CAMLG. The protein is Guided entry of tail-anchored proteins factor 1 of Pongo abelii (Sumatran orangutan).